The following is a 329-amino-acid chain: Cuticle collagen 6 (329 aa).

Triple-helical region stretches follow at residues 142–171, 189–212, 216–248, 253–279, and 282–320; these read GAAG…NGRD, GAPG…PGEP, GKSG…AGRL, GPQG…DGQS, and GPPG…CGHC. Positions 146 to 329 are disordered; sequence PPGPEGPPGN…CPPPRTPPGY (184 aa). The segment covering 156–173 has biased composition (basic and acidic residues); it reads DGKDGRNGNDGKNGRDAE. Residues 187 to 199 are compositionally biased toward low complexity; the sequence is PTGAPGPMGAMGP. Over residues 200-212 the composition is skewed to pro residues; the sequence is KGPPGPKGSPGEP. Positions 251–272 are enriched in pro residues; the sequence is VPGPQGAPGKPGPIGPPGPKGN. Low complexity predominate over residues 273–282; it reads PGPDGQSYQG. Pro residues predominate over residues 320–329; it reads CPPPRTPPGY.

It belongs to the cuticular collagen family. As to quaternary structure, collagen polypeptide chains are complexed within the cuticle by disulfide bonds and other types of covalent cross-links.

In terms of biological role, nematode cuticles are composed largely of collagen-like proteins. The cuticle functions both as an exoskeleton and as a barrier to protect the worm from its environment. This Caenorhabditis elegans protein is Cuticle collagen 6.